Reading from the N-terminus, the 943-residue chain is UvrABC system protein A (943 aa).

ATP is bound at residue 32 to 39 (GLSGSGKS). The C4-type zinc finger occupies 251-278 (CPVCGFTVPELEPRLFSFNAPFGSCPTC). ABC transporter domains follow at residues 308–589 (WNPI…KKSI) and 609–937 (GSGR…QYLK). Residue 641 to 648 (GVSGSGKS) coordinates ATP. The C4-type zinc finger occupies 740–766 (CEACSGDGIIKIEMHFLPDVYVPCEVC).

This sequence belongs to the ABC transporter superfamily. UvrA family. In terms of assembly, forms a heterotetramer with UvrB during the search for lesions.

It is found in the cytoplasm. The UvrABC repair system catalyzes the recognition and processing of DNA lesions. UvrA is an ATPase and a DNA-binding protein. A damage recognition complex composed of 2 UvrA and 2 UvrB subunits scans DNA for abnormalities. When the presence of a lesion has been verified by UvrB, the UvrA molecules dissociate. In Streptococcus mutans serotype c (strain ATCC 700610 / UA159), this protein is UvrABC system protein A.